A 704-amino-acid chain; its full sequence is Elongation factor G (704 aa).

In terms of domain architecture, tr-type G spans 10 to 290 (TKVRNIGIMA…AVVDYLPSPL (281 aa)). GTP-binding positions include 19-26 (AHIDAGKT), 83-87 (DTPGH), and 137-140 (NKMD).

The protein belongs to the TRAFAC class translation factor GTPase superfamily. Classic translation factor GTPase family. EF-G/EF-2 subfamily.

It is found in the cytoplasm. Its function is as follows. Catalyzes the GTP-dependent ribosomal translocation step during translation elongation. During this step, the ribosome changes from the pre-translocational (PRE) to the post-translocational (POST) state as the newly formed A-site-bound peptidyl-tRNA and P-site-bound deacylated tRNA move to the P and E sites, respectively. Catalyzes the coordinated movement of the two tRNA molecules, the mRNA and conformational changes in the ribosome. The polypeptide is Elongation factor G (Beutenbergia cavernae (strain ATCC BAA-8 / DSM 12333 / CCUG 43141 / JCM 11478 / NBRC 16432 / NCIMB 13614 / HKI 0122)).